The sequence spans 493 residues: MANYFNTLNLRQQLAQLGKCRFMQRAEFADGCDVLKGKKVVIVGCGAQGLNQGLNMRDSGLDISYTLRKAAITEKRASWQKATDNGFAVGTYEELIPTADLVLNLTPDKQHSDVVKTVMPLMKQGAALGYSHGFNVVEEGQQIRADITVVMVAPKCPGTEVREEYKRGFGVPTLLAVHPENDPKGVGMAIAKAWASATGGDRAGVLESSFVAEVKSDLMGEQTILCGMLQAGSLLCYDKLVAEGTDPAYAGKLIQFGWETITEALKQGGISLMMDRLSNPAKLRAFELSEQLRTLMRPLFEKHMDDIIAGEFSRGMMADWAEDDAKLFGWREETGKSAFENALAFAGKIAEQEYFDNGVVMVAMVKAGVELAFETMVASGIYEESAYYESLHELPLIANTVARKRLYEMNVVISDTAEYGNYLFANAAVPLLREHFMPTLKAGDLGASKAEGQNVDNLALLAANEATRNHPIEKIGQVLRGYMKDMKRIAVGG.

The KARI N-terminal Rossmann domain maps to 15–208 (AQLGKCRFMQ…GGDRAGVLES (194 aa)). NADP(+) is bound by residues 45–48 (CGAQ), Arg-68, Arg-76, Ser-78, and 108–110 (DKQ). The active site involves His-132. NADP(+) is bound at residue Gly-158. 2 KARI C-terminal knotted domains span residues 209–344 (SFVA…NALA) and 345–486 (FAGK…MKDM). Residues Asp-217, Glu-221, Glu-389, and Glu-393 each coordinate Mg(2+). Ser-414 serves as a coordination point for substrate.

It belongs to the ketol-acid reductoisomerase family. Mg(2+) is required as a cofactor.

The enzyme catalyses (2R)-2,3-dihydroxy-3-methylbutanoate + NADP(+) = (2S)-2-acetolactate + NADPH + H(+). It carries out the reaction (2R,3R)-2,3-dihydroxy-3-methylpentanoate + NADP(+) = (S)-2-ethyl-2-hydroxy-3-oxobutanoate + NADPH + H(+). Its pathway is amino-acid biosynthesis; L-isoleucine biosynthesis; L-isoleucine from 2-oxobutanoate: step 2/4. It functions in the pathway amino-acid biosynthesis; L-valine biosynthesis; L-valine from pyruvate: step 2/4. Involved in the biosynthesis of branched-chain amino acids (BCAA). Catalyzes an alkyl-migration followed by a ketol-acid reduction of (S)-2-acetolactate (S2AL) to yield (R)-2,3-dihydroxy-isovalerate. In the isomerase reaction, S2AL is rearranged via a Mg-dependent methyl migration to produce 3-hydroxy-3-methyl-2-ketobutyrate (HMKB). In the reductase reaction, this 2-ketoacid undergoes a metal-dependent reduction by NADPH to yield (R)-2,3-dihydroxy-isovalerate. The sequence is that of Ketol-acid reductoisomerase (NADP(+)) from Aeromonas salmonicida (strain A449).